Consider the following 254-residue polypeptide: Triosephosphate isomerase (254 aa).

Substrate is bound at residue 9–11; sequence NWK. Histidine 98 serves as the catalytic Electrophile. The active-site Proton acceptor is the glutamate 170. Substrate is bound by residues glycine 176, serine 215, and 236–237; that span reads GG.

The protein belongs to the triosephosphate isomerase family. As to quaternary structure, homodimer.

It is found in the cytoplasm. The enzyme catalyses D-glyceraldehyde 3-phosphate = dihydroxyacetone phosphate. It functions in the pathway carbohydrate biosynthesis; gluconeogenesis. The protein operates within carbohydrate degradation; glycolysis; D-glyceraldehyde 3-phosphate from glycerone phosphate: step 1/1. In terms of biological role, involved in the gluconeogenesis. Catalyzes stereospecifically the conversion of dihydroxyacetone phosphate (DHAP) to D-glyceraldehyde-3-phosphate (G3P). The protein is Triosephosphate isomerase of Buchnera aphidicola subsp. Cinara cedri (strain Cc).